The following is a 375-amino-acid chain: MKFELDKTQGRARRGRLQFERGTVETPAFMPVGTYGTVKGMTPEEVKETGAQILLGNTFHLWLRPGQEVMKLHGDLHDFMQWHGPILTDSGGFQVFSLGATRKITEEGVHFRNPVNGDKVFMDAEKSMEIQYDLGSDIVMIFDECTPYPATHDEAKKSMEMSLRWAQRSRNHFDKQENPNALFGIIQGGVYEDLRDVSVDGLTNIGFDGYAVGGLAVGEPKEDMHRILEHTCPQLPEDKPRYLMGVGKPEDLVEGVRRGIDMFDCVMPTRNARNGHLFVTGGVIKIRNAKHKTDTTPLDPHCDCYTCLNYSKAYLYHLDKCNEILGSRLNTIHNLRYYQRLMASIRSAIEEDRFDVFVEEFYARRDREVPPLKNA.

The active-site Proton acceptor is Asp-89. Substrate-binding positions include Asp-89 to Phe-93, Asp-143, Gln-187, and Gly-214. Residues Gly-245–Asp-251 form an RNA binding region. Asp-264 (nucleophile) is an active-site residue. The RNA binding; important for wobble base 34 recognition stretch occupies residues Thr-269 to Arg-273. Zn(2+) contacts are provided by Cys-302, Cys-304, Cys-307, and His-333.

Belongs to the queuine tRNA-ribosyltransferase family. As to quaternary structure, homodimer. Within each dimer, one monomer is responsible for RNA recognition and catalysis, while the other monomer binds to the replacement base PreQ1. Zn(2+) serves as cofactor.

It carries out the reaction 7-aminomethyl-7-carbaguanine + guanosine(34) in tRNA = 7-aminomethyl-7-carbaguanosine(34) in tRNA + guanine. Its pathway is tRNA modification; tRNA-queuosine biosynthesis. Its function is as follows. Catalyzes the base-exchange of a guanine (G) residue with the queuine precursor 7-aminomethyl-7-deazaguanine (PreQ1) at position 34 (anticodon wobble position) in tRNAs with GU(N) anticodons (tRNA-Asp, -Asn, -His and -Tyr). Catalysis occurs through a double-displacement mechanism. The nucleophile active site attacks the C1' of nucleotide 34 to detach the guanine base from the RNA, forming a covalent enzyme-RNA intermediate. The proton acceptor active site deprotonates the incoming PreQ1, allowing a nucleophilic attack on the C1' of the ribose to form the product. After dissociation, two additional enzymatic reactions on the tRNA convert PreQ1 to queuine (Q), resulting in the hypermodified nucleoside queuosine (7-(((4,5-cis-dihydroxy-2-cyclopenten-1-yl)amino)methyl)-7-deazaguanosine). The sequence is that of Queuine tRNA-ribosyltransferase from Photobacterium profundum (strain SS9).